A 233-amino-acid polypeptide reads, in one-letter code: tRNA (guanine-N(7)-)-methyltransferase (233 aa).

Positions 64, 89, 116, and 138 each coordinate S-adenosyl-L-methionine. The active site involves D138. Substrate contacts are provided by residues K142, D174, and 212–215; that span reads TRYE.

The protein belongs to the class I-like SAM-binding methyltransferase superfamily. TrmB family.

It catalyses the reaction guanosine(46) in tRNA + S-adenosyl-L-methionine = N(7)-methylguanosine(46) in tRNA + S-adenosyl-L-homocysteine. It participates in tRNA modification; N(7)-methylguanine-tRNA biosynthesis. Functionally, catalyzes the formation of N(7)-methylguanine at position 46 (m7G46) in tRNA. In Rhizobium johnstonii (strain DSM 114642 / LMG 32736 / 3841) (Rhizobium leguminosarum bv. viciae), this protein is tRNA (guanine-N(7)-)-methyltransferase.